We begin with the raw amino-acid sequence, 341 residues long: Phosphoribosylformylglycinamidine cyclo-ligase (341 aa).

Belongs to the AIR synthase family.

Its subcellular location is the cytoplasm. The catalysed reaction is 2-formamido-N(1)-(5-O-phospho-beta-D-ribosyl)acetamidine + ATP = 5-amino-1-(5-phospho-beta-D-ribosyl)imidazole + ADP + phosphate + H(+). Its pathway is purine metabolism; IMP biosynthesis via de novo pathway; 5-amino-1-(5-phospho-D-ribosyl)imidazole from N(2)-formyl-N(1)-(5-phospho-D-ribosyl)glycinamide: step 2/2. The polypeptide is Phosphoribosylformylglycinamidine cyclo-ligase (Caldicellulosiruptor saccharolyticus (strain ATCC 43494 / DSM 8903 / Tp8T 6331)).